A 323-amino-acid chain; its full sequence is THO complex subunit 6 homolog (323 aa).

6 WD repeats span residues 6-45 (LLHM…SPDA), 58-96 (AHDG…STKA), 108-147 (LEIP…FKSV), 150-189 (GHTD…PVHC), 200-238 (RPQF…PTSV), and 279-321 (CSPS…ALSL).

The protein belongs to the WD repeat THOC6 family. In terms of assembly, component of the THO subcomplex, which is composed of thoc1, thoc2, thoc3, thoc5, thoc6 and thoc7. Component of the transcription/export (TREX) complex at least composed of alyref/thoc4, ddx39b, sarnp/cip29, chtop and the THO subcomplex.

It localises to the nucleus. It is found in the nucleus speckle. Its function is as follows. Component of the THO subcomplex of the TREX complex which is thought to couple mRNA transcription, processing and nuclear export, and which specifically associates with spliced mRNA and not with unspliced pre-mRNA. Plays a key structural role in the oligomerization of the THO-DDX39B complex. TREX is recruited to spliced mRNAs by a transcription-independent mechanism, binds to mRNA upstream of the exon-junction complex (EJC) and is recruited in a splicing- and cap-dependent manner to a region near the 5' end of the mRNA where it functions in mRNA export to the cytoplasm via the TAP/NXF1 pathway. Plays a role in apoptosis negative control involved in brain development. The sequence is that of THO complex subunit 6 homolog (thoc6) from Danio rerio (Zebrafish).